The following is an 859-amino-acid chain: Probable helicase A859L (859 aa).

A Helicase ATP-binding domain is found at 178-349 (YQELRRSGRA…KNRELFGGVA (172 aa)). 191-198 (MACRCGKT) serves as a coordination point for ATP. The short motif at 298–301 (DECH) is the DEAH box element. One can recognise a Helicase C-terminal domain in the interval 401-553 (HLKTNITAPK…RFYEHLLNPS (153 aa)).

Belongs to the asfivirus helicase A859L family.

This is Probable helicase A859L from African swine fever virus (isolate Tick/South Africa/Pretoriuskop Pr4/1996) (ASFV).